The chain runs to 1068 residues: Cytospin-B (1068 aa).

A disordered region spans residues 1 to 221; the sequence is MRSAAKPWNP…VDGTSVSPGD (221 aa). A lipid anchor (N-myristoyl glycine) is attached at arginine 2. Over residues 29 to 40 the composition is skewed to low complexity; that stretch reads SSGMKSSKSSTS. 2 positions are modified to phosphoserine: serine 38 and serine 55. Threonine 78 bears the Phosphothreonine mark. 5 positions are modified to phosphoserine: serine 112, serine 131, serine 134, serine 137, and serine 138. Low complexity predominate over residues 126–144; sequence SNPRKSVSSPTSSNTPTPT. Threonine 142 is modified (phosphothreonine). Over residues 154–200 the composition is skewed to basic and acidic residues; the sequence is PKQENEGGEKAALESQVRELLAEAKAKDSEINRLRSELKKYKEKRTL. Residues serine 218 and serine 241 each carry the phosphoserine modification. 3 stretches are compositionally biased toward polar residues: residues 261–295, 309–323, and 337–367; these read PNSE…QMSS, LRTS…TKAS, and ETPS…SVSE. The tract at residues 261 to 367 is disordered; sequence PNSEGAASHT…AGSSPNSVSE (107 aa). Phosphoserine is present on residues serine 361, serine 366, serine 369, and serine 425. Positions 579–773 form a coiled coil; sequence EVQEMLKVAR…QKELGDVQGH (195 aa). The tract at residues 777 to 796 is disordered; it reads VTSRAAPPPVDEEPESSEVD. 2 positions are modified to phosphoserine: serine 847 and serine 863. Disordered stretches follow at residues 859 to 885 and 898 to 922; these read AAAV…TQRL and GRTE…SRPP. Polar residues predominate over residues 866–875; sequence QRHSTYSSVR. Basic and acidic residues predominate over residues 898 to 909; the sequence is GRTETLKPDPHL. A phosphoserine mark is found at serine 912 and serine 914. A compositionally biased stretch (low complexity) spans 912-922; sequence SPSLESLSRPP. The Calponin-homology (CH) domain maps to 962-1067; the sequence is GSKRNALLKW…YVAQIYKYFE (106 aa).

Belongs to the cytospin-A family. Highly expressed in testis. Barely detectable in other tissues. Also highly expressed in some cancer cell lines.

The protein resides in the nucleus. Its subcellular location is the membrane. In Homo sapiens (Human), this protein is Cytospin-B (SPECC1).